A 573-amino-acid polypeptide reads, in one-letter code: Sulfite oxidase, mitochondrial (573 aa).

A mitochondrion-targeting transit peptide spans 1 to 34; it reads MRLLRPSWAGLLRGRHHQHQRHHRRLLLTTSRGS. Residues 14-26 show a composition bias toward basic residues; that stretch reads GRHHQHQRHHRRL. Residues 14–50 form a disordered region; that stretch reads GRHHQHQRHHRRLLLTTSRGSNGEREEQQHSQWSSPG. Residues 108-186 enclose the Cytochrome b5 heme-binding domain; it reads LPTYRAEEVE…LEGFRIGNLE (79 aa). 2 residues coordinate heme b: H144 and H168. A hinge region spans residues 190-199; the sequence is VTNVDDELGS. The interval 200 to 423 is moco domain; sequence PWSQEPQRHA…DSHWQQNDYK (224 aa). Mo-molybdopterin-binding positions include 240–244, C287, D344, H383, R388, and 399–401; these read YVRNH and NVK. Residues 424-567 form a homodimerization region; the sequence is GFSPSTDWDT…RGVLANAYHK (144 aa).

It depends on heme b as a cofactor. Requires Mo-molybdopterin as cofactor. In terms of tissue distribution, expressed in the ensheathing glia with relatively weak expression in the CNS cortex (at protein level).

It is found in the mitochondrion intermembrane space. The enzyme catalyses sulfite + O2 + H2O = sulfate + H2O2. It participates in energy metabolism; sulfur metabolism. Required in ensheathing glial cells for normal larval locomotion. Oxidizes sulfite which is required to maintain glutamate homeostasis and as a consequence, neuronal network function. This Drosophila melanogaster (Fruit fly) protein is Sulfite oxidase, mitochondrial.